Consider the following 311-residue polypeptide: Aspartate carbamoyltransferase catalytic subunit (311 aa).

Positions 55 and 56 each coordinate carbamoyl phosphate. An L-aspartate-binding site is contributed by Lys-85. 3 residues coordinate carbamoyl phosphate: Arg-106, His-135, and Gln-138. Residues Arg-168 and Arg-230 each contribute to the L-aspartate site. Leu-268 and Pro-269 together coordinate carbamoyl phosphate.

This sequence belongs to the aspartate/ornithine carbamoyltransferase superfamily. ATCase family. As to quaternary structure, heterododecamer (2C3:3R2) of six catalytic PyrB chains organized as two trimers (C3), and six regulatory PyrI chains organized as three dimers (R2).

It catalyses the reaction carbamoyl phosphate + L-aspartate = N-carbamoyl-L-aspartate + phosphate + H(+). It functions in the pathway pyrimidine metabolism; UMP biosynthesis via de novo pathway; (S)-dihydroorotate from bicarbonate: step 2/3. Functionally, catalyzes the condensation of carbamoyl phosphate and aspartate to form carbamoyl aspartate and inorganic phosphate, the committed step in the de novo pyrimidine nucleotide biosynthesis pathway. The sequence is that of Aspartate carbamoyltransferase catalytic subunit from Serratia proteamaculans (strain 568).